We begin with the raw amino-acid sequence, 1017 residues long: Probable disease resistance protein RDL5 (1017 aa).

Residues 25–52 adopt a coiled-coil conformation; it reads QGVEDQVTELKRDLNMLSSFLKDANAKK. The NB-ARC domain occupies 147–460; that stretch reads KQREMRQKFS…AEGIFQPRHY (314 aa). An ATP-binding site is contributed by 190–197; that stretch reads GMGGLGKT. LRR repeat units lie at residues 602–627, 649–674, 675–699, 768–791, 792–819, 841–865, and 937–962; these read LIHL…NLKL, MQEL…NLVK, LETL…RLST, PSHL…ILEK, LLQL…GFPQ, MPLL…HLPS, and MPFL…QFIY.

Belongs to the disease resistance NB-LRR family.

In terms of biological role, potential disease resistance protein. The sequence is that of Probable disease resistance protein RDL5 (RDL5) from Arabidopsis thaliana (Mouse-ear cress).